The primary structure comprises 338 residues: Acyl-CoA Delta(11) desaturase (338 aa).

The next 2 membrane-spanning stretches (helical) occupy residues 33–53 (IVYF…YGLY) and 61–81 (WATV…VTAG). The Histidine box-1 signature appears at 83–88 (HRLWSH). The helical transmembrane segment at 97–117 (LQILLMVMNSLAFQNTVIDWV) threads the bilayer. The Histidine box-2 motif lies at 120–124 (HRLHH). Helical transmembrane passes span 181-201 (AIPF…VYGW) and 212-234 (AMLR…HIYG). A Histidine box-3 motif is present at residues 260–264 (HNYHH). The disordered stretch occupies residues 318-338 (TNLWGLEDVDTPEDLKNTKGE).

Belongs to the fatty acid desaturase type 1 family. Fe cation is required as a cofactor. As to expression, detected in the pheromone gland.

It localises to the membrane. The catalysed reaction is an 11,12-saturated fatty acyl-CoA + 2 Fe(II)-[cytochrome b5] + O2 + 2 H(+) = an (11Z)-Delta(11)-fatty acyl-CoA + 2 Fe(III)-[cytochrome b5] + 2 H2O. In terms of biological role, catalyzes the formation of delta(11) fatty acyl precursors in the pheromone gland, and has high activity towards palmitic acid and stearic acid. This chain is Acyl-CoA Delta(11) desaturase, found in Spodoptera littoralis (Egyptian cotton leafworm).